The following is a 290-amino-acid chain: UPF0761 membrane protein YihY (290 aa).

The next 6 membrane-spanning stretches (helical) occupy residues 44-64, 104-124, 140-160, 183-203, 210-230, and 244-264; these read LLSL…FPMF, VGAC…DSAL, FAVY…SLAI, IFPL…VPTI, AIVG…GFAL, and VLAV…IVLL.

Belongs to the UPF0761 family.

Its subcellular location is the cell inner membrane. The sequence is that of UPF0761 membrane protein YihY from Shigella boydii serotype 4 (strain Sb227).